The sequence spans 542 residues: MIKTIKTTPYQDQKPGTSGLRKKVPVFAQENYAENFIQSIFDALEGFEGQTLVIGGDGRYYNREVIQKAIKMAAAAGFGKVLVGQGGILSTPAASNVIRKYKAFGGIVLSASHNPGGPTEDFGIKYNIGNGGPAPEKITDAIYARSKVIDSYKISDAADIDLDKIGSFKVDELTVDVIDPVADYAALMEELFDFGAIRSLIAGGFKVVVDSMSAVTGPYAVEILEKRLGAPKGSVRNATPLPDFGGHHPDPNLVHAKELYDDVMSPEGPDFGAASDGDGDRNMVVGKGMFVTPSDSLAIIAANAKLAPGYAAGISGIARSMPTSAAADRVAEKLGLGMYETPTGWKFFGNLMDAGKVTICGEESFGTGSNHVREKDGLWAVLYWLNIVAARKESVKDIVTKHWAEYGRNYYSRHDYEEVDSDAANTLVAILREKLATLPGTSYGNLKVAAADDFAYHDPVDQSVSKNQGIRILFEGGSRIVLRLSGTGTAGATLRLYVERYEPDAARHGIETQSALADLISVADTIAGIKAHTADSEPTVIT.

Residues T17, R21, S112–H113, and K125 contribute to the substrate site. S112 serves as the catalytic Phosphoserine intermediate. S112 contributes to the Mg(2+) binding site. D276, D278, and D280 together coordinate Mg(2+). Residues D280 to R281, T343, E362 to S364, K375, and R495 contribute to the substrate site.

Belongs to the phosphohexose mutase family. The cofactor is Mg(2+).

The enzyme catalyses alpha-D-glucose 1-phosphate = alpha-D-glucose 6-phosphate. In terms of biological role, this enzyme participates in both the breakdown and synthesis of glucose. Required for the synthesis of capsular polysaccharide and normal lipopolysaccharide. The chain is Phosphoglucomutase (pgm) from Rhizobium radiobacter (Agrobacterium tumefaciens).